Consider the following 397-residue polypeptide: DnaJ homolog subfamily A member 1 (397 aa).

The J domain maps to 6–68 (TYYDVLGVKP…KKRELYDKGG (63 aa)). K66 carries the N6-acetyllysine modification. The residue at position 83 (S83) is a Phosphoserine. A CR-type zinc finger spans residues 121–205 (GATRKLALQK…CNGRKIVREK (85 aa)). 8 residues coordinate Zn(2+): C134, C137, C150, C153, C177, C180, C193, and C196. CXXCXGXG motif repeat units follow at residues 134–141 (CDKCEGRG), 150–157 (CPNCRGTG), 177–184 (CMECQGHG), and 193–200 (CKSCNGRK). S335 carries the phosphoserine modification. A disordered region spans residues 352–397 (VEETDEMDQVELVDFDPNQERRRHYNGEAYEDDEHHPRGGVQCQTS). Positions 353–365 (EETDEMDQVELVD) are enriched in acidic residues. Y381 bears the Phosphotyrosine mark. C394 bears the Cysteine methyl ester mark. C394 carries the S-farnesyl cysteine lipid modification. A propeptide spans 395 to 397 (QTS) (removed in mature form).

Identified in a complex with HSPA1B and BAX. Interacts with RNF207.

Its subcellular location is the membrane. It is found in the cytoplasm. It localises to the microsome. The protein localises to the mitochondrion. The protein resides in the nucleus. Its subcellular location is the perinuclear region. Functionally, co-chaperone for HSPA8/Hsc70. Plays a role in protein transport into mitochondria via its role as co-chaperone. Functions as co-chaperone for HSPA1B and negatively regulates the translocation of BAX from the cytosol to mitochondria in response to cellular stress, thereby protecting cells against apoptosis. Stimulates ATP hydrolysis, but not the folding of unfolded proteins mediated by HSPA1A (in vitro). Promotes apoptosis in response to cellular stress mediated by exposure to anisomycin or UV. This chain is DnaJ homolog subfamily A member 1 (DNAJA1), found in Chlorocebus aethiops (Green monkey).